Consider the following 156-residue polypeptide: Large ribosomal subunit protein uL30 (156 aa).

It belongs to the universal ribosomal protein uL30 family. As to quaternary structure, part of the 50S ribosomal subunit.

In Sulfolobus acidocaldarius (strain ATCC 33909 / DSM 639 / JCM 8929 / NBRC 15157 / NCIMB 11770), this protein is Large ribosomal subunit protein uL30.